Reading from the N-terminus, the 89-residue chain is Large ribosomal subunit protein bL27 (89 aa).

Positions 1-20 are disordered; it reads MAHKKAGGSSRNGRDSAGKR.

Belongs to the bacterial ribosomal protein bL27 family.

This chain is Large ribosomal subunit protein bL27, found in Rhodopseudomonas palustris (strain HaA2).